We begin with the raw amino-acid sequence, 600 residues long: KIF-binding protein (600 aa).

A coiled-coil region spans residues Lys-384–Leu-434.

It belongs to the KIF-binding protein family.

The protein localises to the cytoplasm. Its subcellular location is the cytoskeleton. In Drosophila melanogaster (Fruit fly), this protein is KIF-binding protein.